The primary structure comprises 520 residues: Hydroxymethylglutaryl-CoA synthase, cytoplasmic (520 aa).

Residue Ser-4 is modified to Phosphoserine. Residues Asp-43 and Ala-44 each contribute to the (3S)-3-hydroxy-3-methylglutaryl-CoA site. 44-46 (AGK) is a CoA binding site. The residue at position 46 (Lys-46) is an N6-acetyllysine. Glu-95 acts as the Proton donor/acceptor in catalysis. Residues Cys-129, Asn-167, Thr-171, Ser-221, and His-264 each coordinate (3S)-3-hydroxy-3-methylglutaryl-CoA. Catalysis depends on Cys-129, which acts as the Acyl-thioester intermediate. Asn-167 serves as a coordination point for CoA. Ser-221 contacts CoA. His-264 acts as the Proton donor/acceptor in catalysis. CoA is bound by residues Lys-269 and Lys-273. (3S)-3-hydroxy-3-methylglutaryl-CoA-binding residues include Lys-273, Asn-343, and Ser-377. Residue Lys-273 is modified to N6-acetyllysine. A disordered region spans residues 487–520 (NTATEHIPSPAKKVPRLPATSGEPESAVISNGEH). 2 positions are modified to phosphoserine: Ser-495 and Ser-516.

This sequence belongs to the thiolase-like superfamily. HMG-CoA synthase family. Homodimer.

It localises to the cytoplasm. The enzyme catalyses acetoacetyl-CoA + acetyl-CoA + H2O = (3S)-3-hydroxy-3-methylglutaryl-CoA + CoA + H(+). The protein operates within metabolic intermediate biosynthesis; (R)-mevalonate biosynthesis; (R)-mevalonate from acetyl-CoA: step 2/3. Catalyzes the condensation of acetyl-CoA with acetoacetyl-CoA to form HMG-CoA, which is converted by HMG-CoA reductase (HMGCR) into mevalonate, a precursor for cholesterol synthesis. The protein is Hydroxymethylglutaryl-CoA synthase, cytoplasmic of Rattus norvegicus (Rat).